The chain runs to 260 residues: MKSIKRIGLCISLLILIIFATSCGSNKITGDSKEEQIKKSFAKSLDKYPTENLEEFYDKEGYRDGEFEKDDKGTWLIRSEMKIQLKGENLESRGAVIEINRNTRTAKGNYIVREVVEDSDGMTHNHTKRYPVKMENNKMIPLKSIDDEKVKKEIEEFKFFVQYGNFKELENYKEDEVSYNPEVPIYSAQYQLKNSDYNVEQLRKRYNIPTQKAPKLLLKGSGNLKGSSVGYKNIEFTFVENKEENIYFTDSVYFNPSEDK.

Residues 1–22 (MKSIKRIGLCISLLILIIFATS) form the signal peptide. Cys23 is lipidated: N-palmitoyl cysteine. The S-diacylglycerol cysteine moiety is linked to residue Cys23.

It belongs to the staphylococcal tandem lipoprotein family.

It is found in the cell membrane. This is an uncharacterized protein from Staphylococcus aureus (strain N315).